The following is a 218-amino-acid chain: MAGYRADDEYDYLFKLVLIGDSGVGKSNLLSRFTKNEFNLESKSTIGVEFATKSLNIDNKVIKAQIWDTAGQERYRAITSAYYRGAVGALLVYDVTRHVTYENVTRWLKELRDHTDPNIVVMLIGNKSDLRHLVAVSTDEAKGLAEREGLYFMETSALEATNVENAFTEALTQIYRIVSKKAVEAGDEGATSSAPPKGETINIKDEGSSWKKFGCCSS.

20–27 serves as a coordination point for GTP; the sequence is GDSGVGKS. Positions 42–50 match the Effector region motif; the sequence is SKSTIGVEF. Residues 68-72 and 126-129 contribute to the GTP site; these read DTAGQ and NKSD. The tract at residues 186 to 205 is disordered; sequence GDEGATSSAPPKGETINIKD. Residues C215 and C216 are each lipidated (S-geranylgeranyl cysteine).

It belongs to the small GTPase superfamily. Rab family. In terms of tissue distribution, its expression is weak in leaves, higher in stems and roots, but highest in petals, stigma and stamens.

The protein resides in the cell membrane. Functionally, protein transport. Probably involved in vesicular traffic. The sequence is that of Ras-related protein YPT3 (YPT3) from Nicotiana plumbaginifolia (Leadwort-leaved tobacco).